The primary structure comprises 394 residues: GDNF family receptor alpha-like (394 aa).

An N-terminal signal peptide occupies residues 1 to 19 (MLVFIFLAVRLSSENESSS). At 20–350 (QTNDCAYFMR…LTGFNSPFSG (331 aa)) the chain is on the extracellular side. Asn-65, Asn-101, and Asn-115 each carry an N-linked (GlcNAc...) asparagine glycan. Disulfide bonds link Cys-132/Cys-190, Cys-139/Cys-145, Cys-156/Cys-168, Cys-163/Cys-211, Cys-192/Cys-199, Cys-221/Cys-292, Cys-228/Cys-234, Cys-245/Cys-276, Cys-253/Cys-259, Cys-270/Cys-317, and Cys-294/Cys-305. Positions 150–229 (ALYLKACTAN…TCLSVIHTCR (80 aa)) are required for interaction with GDF15. The chain crosses the membrane as a helical span at residues 351-371 (ELIYVVVCMVVTSGILSLVML). At 372 to 394 (KLRIPSKKRDPAPIEIAGAVIIQ) the chain is on the cytoplasmic side.

This sequence belongs to the GDNFR family. Interacts (via the extracellular domain) with GDF15 and RET; receptor of GDF15, mediates cellular signaling through interaction with RET after GDF15-binding. Interaction with RET requires previous GDF15-binding. Cleaved and inactivated by MMP14, inhibiting the GDF15-GFRAL aversive response. In terms of tissue distribution, expressed in the brainstem, restricted to cells in the area postrema and the immediately adjacent region of the nucleus tractus solitarius. Detected at low levels in testis.

Its subcellular location is the cell membrane. Functionally, brainstem-restricted receptor for GDF15 hormone, which triggers an aversive response, characterized by nausea, vomiting, and/or loss of appetite in response to various stresses. The aversive response is both required to reduce continuing exposure to those stresses at the time of exposure and to promote avoidance behavior in the future. The GDF15-GFRAL aversive response is triggered by stresses, such as anticancer drugs (camptothecin or cisplatin), cancers or drugs such as metformin. Upon interaction with its ligand, GDF15, mediates the GDF15-induced autophosphorylation and activation of the RET tyrosine kinase receptor, leading to activation of MAPK- and AKT- signaling pathways. Ligand-binding activates GFRAL-expressing neurons localized in the area postrema and nucleus tractus solitarius of the brainstem. The GDF15-GFRAL signal induces expression of genes involved in metabolism, such as lipid metabolism in adipose tissues. This chain is GDNF family receptor alpha-like, found in Rattus norvegicus (Rat).